A 235-amino-acid chain; its full sequence is Caffeoyl-CoA O-methyltransferase (235 aa).

A substrate-binding site is contributed by Lys-8. Residues Val-52, Glu-74, 76–77, Ser-82, Asp-100, and Ala-129 each bind S-adenosyl-L-methionine; that span reads GV. Asp-151 serves as a coordination point for substrate. Position 151 (Asp-151) interacts with a divalent metal cation. Position 153 (Asp-153) interacts with S-adenosyl-L-methionine. A divalent metal cation-binding residues include Asp-177 and Asn-178.

The protein belongs to the class I-like SAM-binding methyltransferase superfamily. Cation-dependent O-methyltransferase family. CCoAMT subfamily. It depends on a divalent metal cation as a cofactor.

The catalysed reaction is (E)-caffeoyl-CoA + S-adenosyl-L-methionine = (E)-feruloyl-CoA + S-adenosyl-L-homocysteine + H(+). The protein operates within aromatic compound metabolism; phenylpropanoid biosynthesis. Functionally, methylates caffeoyl-CoA to feruloyl-CoA and 5-hydroxyferuloyl-CoA to sinapoyl-CoA. Plays a role in the synthesis of feruloylated polysaccharides. Involved in the reinforcement of the plant cell wall. Also involved in the responding to wounding or pathogen challenge by the increased formation of cell wall-bound ferulic acid polymers. In Populus kitakamiensis (Aspen), this protein is Caffeoyl-CoA O-methyltransferase.